Consider the following 281-residue polypeptide: Pantothenate synthetase (281 aa).

An ATP-binding site is contributed by Met30 to His37. His37 functions as the Proton donor in the catalytic mechanism. Gln61 is a (R)-pantoate binding site. Gln61 lines the beta-alanine pocket. An ATP-binding site is contributed by Gly148–Asp151. (R)-pantoate is bound at residue Gln154. Residues Ala177 and Leu185–Arg188 contribute to the ATP site.

Belongs to the pantothenate synthetase family. Homodimer.

It localises to the cytoplasm. The enzyme catalyses (R)-pantoate + beta-alanine + ATP = (R)-pantothenate + AMP + diphosphate + H(+). Its pathway is cofactor biosynthesis; (R)-pantothenate biosynthesis; (R)-pantothenate from (R)-pantoate and beta-alanine: step 1/1. Its function is as follows. Catalyzes the condensation of pantoate with beta-alanine in an ATP-dependent reaction via a pantoyl-adenylate intermediate. The sequence is that of Pantothenate synthetase from Acinetobacter baylyi (strain ATCC 33305 / BD413 / ADP1).